The following is a 1070-amino-acid chain: DNA-directed RNA polymerase subunit beta (1070 aa).

Belongs to the RNA polymerase beta chain family. As to quaternary structure, in plastids the minimal PEP RNA polymerase catalytic core is composed of four subunits: alpha, beta, beta', and beta''. When a (nuclear-encoded) sigma factor is associated with the core the holoenzyme is formed, which can initiate transcription.

It localises to the plastid. The protein resides in the chloroplast. It catalyses the reaction RNA(n) + a ribonucleoside 5'-triphosphate = RNA(n+1) + diphosphate. Functionally, DNA-dependent RNA polymerase catalyzes the transcription of DNA into RNA using the four ribonucleoside triphosphates as substrates. The polypeptide is DNA-directed RNA polymerase subunit beta (Solanum lycopersicum (Tomato)).